A 200-amino-acid polypeptide reads, in one-letter code: Oligoribonuclease (200 aa).

The Exonuclease domain maps to 5–169 (MVWIDCEMTG…ADIRESIAEL (165 aa)). The active site involves Tyr-126.

This sequence belongs to the oligoribonuclease family.

It localises to the cytoplasm. 3'-to-5' exoribonuclease specific for small oligoribonucleotides. The protein is Oligoribonuclease of Streptomyces avermitilis (strain ATCC 31267 / DSM 46492 / JCM 5070 / NBRC 14893 / NCIMB 12804 / NRRL 8165 / MA-4680).